The following is a 116-amino-acid chain: MWDPLVNDFPKSLHGFRCMLAIKYLQYIQENYPSNSLGFVYLTELIQVLRIRKHAKAELRYRLLYPDVECAEEADLRHPAFLTCHCGKCPCQREKEEVDQPTHVEETEILSVIPLS.

This sequence belongs to the geminiviridae protein AV2/V2 family. As to quaternary structure, interacts with host SGS3.

Its subcellular location is the host cytoplasm. It localises to the host perinuclear region. Functionally, through its interaction with host SGS3, acts as a suppressor of RNA-mediated gene silencing, also known as post-transcriptional gene silencing (PTGS), a mechanism of plant viral defense that limits the accumulation of viral RNAs. In Mungbean yellow mosaic virus (strain Vigna) (MYMV), this protein is Protein AV2.